A 1002-amino-acid chain; its full sequence is Inversin-B (1002 aa).

16 ANK repeats span residues 9–39 (SLAS…VIDQ), 43–72 (LGRT…KVNR), 76–105 (SGRT…DCTH), 109–140 (CDIT…QVDA), 144–173 (RKQT…NIGI), 177–209 (EGKI…TESL), 216–246 (EGRT…NVAP), 250–279 (LFRT…SPNI), 284–313 (QGAT…VRDE), 317–346 (EGRT…KLEV), 352–381 (YGGT…QADA), 385–414 (MKHT…KVHL), 418–447 (DGRS…NPDA), 451–480 (EGRT…DPNI), 484–513 (NGRT…FPNQ), and 519–549 (ERYT…SIAA). Residues 486–494 (RTALHWSCN) carry the D-box 1 motif. Residues 551–580 (QDIAAFKIQAVYKGHKVRRAFQERKNLLMK) enclose the IQ 1 domain. Composition is skewed to basic and acidic residues over residues 586–599 (KGAA…ENRQ), 609–621 (KQKD…RQNK), and 643–656 (AEDR…ENLE). 2 disordered regions span residues 586-804 (KGAA…KGRR) and 862-886 (SAKT…SSSA). 2 stretches are compositionally biased toward polar residues: residues 670-680 (QRITAQIQSSP) and 687-706 (NSIQ…SSPL). Basic and acidic residues-rich tracts occupy residues 733-763 (HQME…EERK) and 770-796 (QSSD…EGKK). Residues 959–967 (RKQLFQRKN) carry the D-box 2 motif. Residues 966-995 (KNHAATVIQKAWRTYWVRKSSCKTRHSRSQ) form the IQ 2 domain.

In terms of assembly, interacts with apc2. Binds calmodulin.

Its subcellular location is the cytoplasm. It is found in the cytoskeleton. Required for normal renal development and establishment of left-right axis. Probably acts as a molecular switch between different Wnt signaling pathways. Inhibits the canonical Wnt pathway by targeting cytoplasmic disheveled for degradation by the ubiquitin-proteasome. This suggests that it is required in renal development to oppose the repression of terminal differentiation of tubular epithelial cells by Wnt signaling. Plays a central role in convergent extension movements in gastrulating embryos, a processus regulated by Wnt signaling. The sequence is that of Inversin-B (invs-b) from Xenopus laevis (African clawed frog).